The primary structure comprises 347 residues: Holliday junction branch migration complex subunit RuvB (347 aa).

The interval 1 to 183 is large ATPase domain (RuvB-L); that stretch reads MSEERFVSGH…FGVVLQLQFY (183 aa). Residues Leu-22, Arg-23, Gly-64, Lys-67, Thr-68, Thr-69, 130–132, Arg-173, Tyr-183, and Arg-220 contribute to the ATP site; that span reads EDF. Thr-68 is a Mg(2+) binding site. Residues 184 to 254 form a small ATPAse domain (RuvB-S) region; the sequence is SEEELTRILM…VADAGLRMMG (71 aa). The head domain (RuvB-H) stretch occupies residues 257–347; the sequence is AMGLDTVDHK…PEGPVQPRLF (91 aa). Residues Arg-312 and Arg-317 each contribute to the DNA site.

This sequence belongs to the RuvB family. In terms of assembly, homohexamer. Forms an RuvA(8)-RuvB(12)-Holliday junction (HJ) complex. HJ DNA is sandwiched between 2 RuvA tetramers; dsDNA enters through RuvA and exits via RuvB. An RuvB hexamer assembles on each DNA strand where it exits the tetramer. Each RuvB hexamer is contacted by two RuvA subunits (via domain III) on 2 adjacent RuvB subunits; this complex drives branch migration. In the full resolvosome a probable DNA-RuvA(4)-RuvB(12)-RuvC(2) complex forms which resolves the HJ.

The protein localises to the cytoplasm. The catalysed reaction is ATP + H2O = ADP + phosphate + H(+). Functionally, the RuvA-RuvB-RuvC complex processes Holliday junction (HJ) DNA during genetic recombination and DNA repair, while the RuvA-RuvB complex plays an important role in the rescue of blocked DNA replication forks via replication fork reversal (RFR). RuvA specifically binds to HJ cruciform DNA, conferring on it an open structure. The RuvB hexamer acts as an ATP-dependent pump, pulling dsDNA into and through the RuvAB complex. RuvB forms 2 homohexamers on either side of HJ DNA bound by 1 or 2 RuvA tetramers; 4 subunits per hexamer contact DNA at a time. Coordinated motions by a converter formed by DNA-disengaged RuvB subunits stimulates ATP hydrolysis and nucleotide exchange. Immobilization of the converter enables RuvB to convert the ATP-contained energy into a lever motion, pulling 2 nucleotides of DNA out of the RuvA tetramer per ATP hydrolyzed, thus driving DNA branch migration. The RuvB motors rotate together with the DNA substrate, which together with the progressing nucleotide cycle form the mechanistic basis for DNA recombination by continuous HJ branch migration. Branch migration allows RuvC to scan DNA until it finds its consensus sequence, where it cleaves and resolves cruciform DNA. This is Holliday junction branch migration complex subunit RuvB from Symbiobacterium thermophilum (strain DSM 24528 / JCM 14929 / IAM 14863 / T).